Consider the following 145-residue polypeptide: Synaptojanin-2-binding protein (145 aa).

Topologically, residues 1–117 (MNGRVDYLVS…VHRGDGEPSG (117 aa)) are cytoplasmic. Residues 13–100 (EINLTRGPSG…AVSLRVQHRL (88 aa)) enclose the PDZ domain. The chain crosses the membrane as a helical span at residues 118 to 138 (VPVAVVLLPVFALTLVAVWAF). The Mitochondrial intermembrane segment spans residues 139-145 (VRYRKQL).

Binds (via the PDZ domain) to isoform 2A of SYNJ2 (via the unique motif in the C-terminus). Interacts (via C-terminus) with RALBP1. Interacts (via PDZ domain) with ACVR2A (via C-terminus) and ACVR2B (via C-terminus). Forms a ternary complex with ACVR2A and RALBP1. Interacts with MAPK12. Interacts with DLL1; enhances DLL1 protein stability, and promotes notch signaling in endothelial cells. As to expression, widely expressed.

Its subcellular location is the mitochondrion outer membrane. Functionally, regulates endocytosis of activin type 2 receptor kinases through the Ral/RALBP1-dependent pathway and may be involved in suppression of activin-induced signal transduction. The chain is Synaptojanin-2-binding protein (Synj2bp) from Rattus norvegicus (Rat).